A 484-amino-acid chain; its full sequence is Argininosuccinate lyase (484 aa).

It belongs to the lyase 1 family. Argininosuccinate lyase subfamily.

The protein resides in the cytoplasm. It catalyses the reaction 2-(N(omega)-L-arginino)succinate = fumarate + L-arginine. Its pathway is amino-acid biosynthesis; L-arginine biosynthesis; L-arginine from L-ornithine and carbamoyl phosphate: step 3/3. This chain is Argininosuccinate lyase, found in Methanocaldococcus jannaschii (strain ATCC 43067 / DSM 2661 / JAL-1 / JCM 10045 / NBRC 100440) (Methanococcus jannaschii).